A 32-amino-acid polypeptide reads, in one-letter code: Cytochrome b6-f complex subunit 7 (32 aa).

Residues I5 to L25 form a helical membrane-spanning segment.

The protein belongs to the PetM family. As to quaternary structure, the 4 large subunits of the cytochrome b6-f complex are cytochrome b6, subunit IV (17 kDa polypeptide, PetD), cytochrome f and the Rieske protein, while the 4 small subunits are PetG, PetL, PetM and PetN. The complex functions as a dimer.

Its subcellular location is the cellular thylakoid membrane. In terms of biological role, component of the cytochrome b6-f complex, which mediates electron transfer between photosystem II (PSII) and photosystem I (PSI), cyclic electron flow around PSI, and state transitions. This is Cytochrome b6-f complex subunit 7 from Prochlorococcus marinus (strain SARG / CCMP1375 / SS120).